A 242-amino-acid chain; its full sequence is Tryptophan synthase alpha chain (242 aa).

Residues E31 and D42 each act as proton acceptor in the active site.

It belongs to the TrpA family. In terms of assembly, tetramer of two alpha and two beta chains.

It catalyses the reaction (1S,2R)-1-C-(indol-3-yl)glycerol 3-phosphate + L-serine = D-glyceraldehyde 3-phosphate + L-tryptophan + H2O. It functions in the pathway amino-acid biosynthesis; L-tryptophan biosynthesis; L-tryptophan from chorismate: step 5/5. The alpha subunit is responsible for the aldol cleavage of indoleglycerol phosphate to indole and glyceraldehyde 3-phosphate. In Staphylococcus aureus (strain Mu3 / ATCC 700698), this protein is Tryptophan synthase alpha chain.